The following is a 121-amino-acid chain: Large ribosomal subunit protein bL12 (121 aa).

Belongs to the bacterial ribosomal protein bL12 family. As to quaternary structure, homodimer. Part of the ribosomal stalk of the 50S ribosomal subunit. Forms a multimeric L10(L12)X complex, where L10 forms an elongated spine to which 2 to 4 L12 dimers bind in a sequential fashion. Binds GTP-bound translation factors.

Functionally, forms part of the ribosomal stalk which helps the ribosome interact with GTP-bound translation factors. Is thus essential for accurate translation. The polypeptide is Large ribosomal subunit protein bL12 (Escherichia coli O45:K1 (strain S88 / ExPEC)).